A 119-amino-acid chain; its full sequence is Integration host factor subunit alpha (119 aa).

The interval 96–119 is disordered; the sequence is INGQQANGKMNGESAPSEFSAETE.

It belongs to the bacterial histone-like protein family. In terms of assembly, heterodimer of an alpha and a beta chain.

In terms of biological role, this protein is one of the two subunits of integration host factor, a specific DNA-binding protein that functions in genetic recombination as well as in transcriptional and translational control. This is Integration host factor subunit alpha from Bradyrhizobium sp. (strain ORS 278).